We begin with the raw amino-acid sequence, 425 residues long: CinA-like protein (425 aa).

It belongs to the CinA family.

This is CinA-like protein from Shewanella sp. (strain ANA-3).